The sequence spans 413 residues: SWIRM domain-containing protein FUN19 (413 aa).

Residues 35–51 show a composition bias toward low complexity; the sequence is KASNNNNDSNKNGLNMS. Disordered regions lie at residues 35–55, 189–211, and 249–271; these read KASN…DYSN, YNDD…PLAS, and YSPQ…PSAS. A Phosphothreonine modification is found at T194. A compositionally biased stretch (low complexity) spans 200–211; sequence SSSSRLPSPLAS. A phosphoserine mark is found at S207 and S211. The region spanning 316 to 413 is the SWIRM domain; it reads LKIEWKGSPM…LQDSNFTKYL (98 aa).

In Saccharomyces cerevisiae (strain ATCC 204508 / S288c) (Baker's yeast), this protein is SWIRM domain-containing protein FUN19 (FUN19).